The primary structure comprises 741 residues: Probable basic-leucine zipper transcription factor I (741 aa).

A coiled-coil region spans residues 77–117 (QIIEQIQFLQQQQQQQHDQIQQQLHNFQQQYQQQYQQRQQQ). Low complexity-rich tracts occupy residues 153-164 (QQPPQSLQQQQQ), 172-237 (PQQQ…QIQK), 277-290 (IQQQQLPPQTIQQK), and 381-390 (QQQQQQQQQQ). Disordered stretches follow at residues 153-237 (QQPP…QIQK), 277-305 (IQQQQLPPQTIQQKEINKKNQSKQSSNSM), and 349-390 (KQKE…QQQQ). In terms of domain architecture, bZIP spans 429–492 (ESKKSIKRIN…HEGGTMAILK (64 aa)). The basic motif stretch occupies residues 431–432 (KK). A leucine-zipper region spans residues 434-441 (IKRINQNI).

This sequence belongs to the bZIP family.

It localises to the nucleus. Functionally, probable transcriptional regulator. The sequence is that of Probable basic-leucine zipper transcription factor I (bzpI) from Dictyostelium discoideum (Social amoeba).